Here is a 185-residue protein sequence, read N- to C-terminus: Ribosome-recycling factor (185 aa).

The segment covering 131 to 155 has biased composition (basic and acidic residues); that stretch reads DRKNANDKIKKSEKDKEITADESKS. Residues 131 to 156 are disordered; that stretch reads DRKNANDKIKKSEKDKEITADESKSA.

This sequence belongs to the RRF family.

Its subcellular location is the cytoplasm. Functionally, responsible for the release of ribosomes from messenger RNA at the termination of protein biosynthesis. May increase the efficiency of translation by recycling ribosomes from one round of translation to another. This Sulfurimonas denitrificans (strain ATCC 33889 / DSM 1251) (Thiomicrospira denitrificans (strain ATCC 33889 / DSM 1251)) protein is Ribosome-recycling factor.